The sequence spans 421 residues: Adenosylhomocysteinase (421 aa).

Substrate-binding residues include Asp-128 and Glu-153. 154-156 is a binding site for NAD(+); that stretch reads TTT. 2 residues coordinate substrate: Lys-183 and Asp-187. Residues Asn-188, 217–222, Glu-240, 296–298, and Asn-343 contribute to the NAD(+) site; these read GYGWCG and AGH.

This sequence belongs to the adenosylhomocysteinase family. NAD(+) serves as cofactor.

Its subcellular location is the cytoplasm. The catalysed reaction is S-adenosyl-L-homocysteine + H2O = L-homocysteine + adenosine. The protein operates within amino-acid biosynthesis; L-homocysteine biosynthesis; L-homocysteine from S-adenosyl-L-homocysteine: step 1/1. Its function is as follows. May play a key role in the regulation of the intracellular concentration of adenosylhomocysteine. The chain is Adenosylhomocysteinase from Thermococcus kodakarensis (strain ATCC BAA-918 / JCM 12380 / KOD1) (Pyrococcus kodakaraensis (strain KOD1)).